We begin with the raw amino-acid sequence, 555 residues long: Phosphoglucomutase (555 aa).

Residues T45, R49, 148 to 149 (SH), and K158 each bind substrate. S148 acts as the Phosphoserine intermediate in catalysis. S148 contacts Mg(2+). Positions 306, 308, and 310 each coordinate Mg(2+). Residues 310 to 311 (DR) and 393 to 395 (EES) each bind substrate.

The protein belongs to the phosphohexose mutase family. Mg(2+) serves as cofactor.

It carries out the reaction alpha-D-glucose 1-phosphate = alpha-D-glucose 6-phosphate. Functionally, this enzyme participates in both the breakdown and synthesis of glucose. The chain is Phosphoglucomutase (celB) from Komagataeibacter xylinus (Gluconacetobacter xylinus).